The primary structure comprises 91 residues: UPF0250 protein NGK_1021 (91 aa).

It belongs to the UPF0250 family.

The chain is UPF0250 protein NGK_1021 from Neisseria gonorrhoeae (strain NCCP11945).